Consider the following 434-residue polypeptide: Homogentisate 1,2-dioxygenase (434 aa).

His-289 acts as the Proton acceptor in catalysis. Residues His-332 and Glu-338 each contribute to the Fe cation site. Residues Tyr-347 and His-368 each coordinate homogentisate. Residue His-368 coordinates Fe cation.

The protein belongs to the homogentisate dioxygenase family. In terms of assembly, hexamer; dimer of trimers. Requires Fe cation as cofactor.

The enzyme catalyses homogentisate + O2 = 4-maleylacetoacetate + H(+). It functions in the pathway amino-acid degradation; L-phenylalanine degradation; acetoacetate and fumarate from L-phenylalanine: step 4/6. Functionally, involved in the catabolism of homogentisate (2,5-dihydroxyphenylacetate or 2,5-OH-PhAc), a central intermediate in the degradation of phenylalanine and tyrosine. Catalyzes the oxidative ring cleavage of the aromatic ring of homogentisate to yield maleylacetoacetate. This chain is Homogentisate 1,2-dioxygenase, found in Pseudomonas syringae pv. syringae (strain B728a).